Here is a 265-residue protein sequence, read N- to C-terminus: Hydroxyethylthiazole kinase 2 (265 aa).

M39 is a binding site for substrate. K115 and T168 together coordinate ATP. Position 195 (G195) interacts with substrate.

Belongs to the Thz kinase family. Mg(2+) serves as cofactor.

It carries out the reaction 5-(2-hydroxyethyl)-4-methylthiazole + ATP = 4-methyl-5-(2-phosphooxyethyl)-thiazole + ADP + H(+). The protein operates within cofactor biosynthesis; thiamine diphosphate biosynthesis; 4-methyl-5-(2-phosphoethyl)-thiazole from 5-(2-hydroxyethyl)-4-methylthiazole: step 1/1. Functionally, catalyzes the phosphorylation of the hydroxyl group of 4-methyl-5-beta-hydroxyethylthiazole (THZ). This is Hydroxyethylthiazole kinase 2 from Clostridium botulinum (strain Langeland / NCTC 10281 / Type F).